The primary structure comprises 198 residues: Proteasome subunit beta 1 (198 aa).

A propeptide spans 1-8 (MSMYMPGA) (removed in mature form; by autocatalysis). The Nucleophile role is filled by Thr-9.

It belongs to the peptidase T1B family. As to quaternary structure, the 20S proteasome core is composed of 14 alpha and 14 beta subunits that assemble into four stacked heptameric rings, resulting in a barrel-shaped structure. The two inner rings, each composed of seven catalytic beta subunits, are sandwiched by two outer rings, each composed of seven alpha subunits. The catalytic chamber with the active sites is on the inside of the barrel. Has a gated structure, the ends of the cylinder being occluded by the N-termini of the alpha-subunits. Is capped at one or both ends by the proteasome regulatory ATPase, PAN.

The protein localises to the cytoplasm. It carries out the reaction Cleavage of peptide bonds with very broad specificity.. The formation of the proteasomal ATPase PAN-20S proteasome complex, via the docking of the C-termini of PAN into the intersubunit pockets in the alpha-rings, triggers opening of the gate for substrate entry. Interconversion between the open-gate and close-gate conformations leads to a dynamic regulation of the 20S proteasome proteolysis activity. Its function is as follows. Component of the proteasome core, a large protease complex with broad specificity involved in protein degradation. The polypeptide is Proteasome subunit beta 1 (Nitrosopumilus maritimus (strain SCM1)).